Here is a 157-residue protein sequence, read N- to C-terminus: ATP synthase subunit b (157 aa).

Residues 11–31 (LIMFAMFTWFCMKFIWPPIVM) traverse the membrane as a helical segment.

The protein belongs to the ATPase B chain family. F-type ATPases have 2 components, F(1) - the catalytic core - and F(0) - the membrane proton channel. F(1) has five subunits: alpha(3), beta(3), gamma(1), delta(1), epsilon(1). F(0) has three main subunits: a(1), b(2) and c(10-14). The alpha and beta chains form an alternating ring which encloses part of the gamma chain. F(1) is attached to F(0) by a central stalk formed by the gamma and epsilon chains, while a peripheral stalk is formed by the delta and b chains.

The protein localises to the cell inner membrane. Its function is as follows. F(1)F(0) ATP synthase produces ATP from ADP in the presence of a proton or sodium gradient. F-type ATPases consist of two structural domains, F(1) containing the extramembraneous catalytic core and F(0) containing the membrane proton channel, linked together by a central stalk and a peripheral stalk. During catalysis, ATP synthesis in the catalytic domain of F(1) is coupled via a rotary mechanism of the central stalk subunits to proton translocation. Component of the F(0) channel, it forms part of the peripheral stalk, linking F(1) to F(0). The chain is ATP synthase subunit b from Vesicomyosocius okutanii subsp. Calyptogena okutanii (strain HA).